A 122-amino-acid polypeptide reads, in one-letter code: Protein GL2-INTERACTING REPRESSOR 1 (122 aa).

The segment covering 1-10 (MSRRSPKLEL) has biased composition (basic and acidic residues). Positions 1–62 (MSRRSPKLEL…PSVRYSTSPE (62 aa)) are disordered. The short motif at 7–12 (KLELKL) is the EAR element. The segment covering 27-46 (SPSRSATTSPTSPPSSCVSS) has biased composition (low complexity). The span at 47 to 62 (EMNQDEPSVRYSTSPE) shows a compositional bias: polar residues.

Interacts with GL2. Interacts with TPL. Expressed in root and shoot meristems.

Its subcellular location is the nucleus. Acts as a negative regulator of root hair development redundantly with GIR2. GIR1 and GIR2 may function as adapter proteins that associate with GL2 and participate in the control of root hair formation. GIR1 and GIR2 may function as adapter proteins that associate with TPL and participate in the repression of root gene expression. This chain is Protein GL2-INTERACTING REPRESSOR 1, found in Arabidopsis thaliana (Mouse-ear cress).